The chain runs to 334 residues: Probable allantoicase (334 aa).

It belongs to the allantoicase family.

The catalysed reaction is allantoate + H2O = (S)-ureidoglycolate + urea. It participates in nitrogen metabolism; (S)-allantoin degradation; (S)-ureidoglycolate from allantoate (aminidohydrolase route): step 1/1. The polypeptide is Probable allantoicase (Acinetobacter baylyi (strain ATCC 33305 / BD413 / ADP1)).